The chain runs to 163 residues: Augmin complex subunit wac (163 aa).

The stretch at 86 to 115 (ELQRILSSIEEATRDVVMLERFNAAAEERL) forms a coiled coil.

In terms of assembly, component of the augmin complex composed of dgt2, dgt3, dgt4, dgt5, dgt6, msd1, msd5 and wac. The complex interacts directly or indirectly with microtubules and is required for centrosome-independent generation of spindle microtubules. wac interacts directly (via coiled coil) with dgt2. As to expression, in adult females, detected only in the abdomen with no expression in the head or thorax (at protein level).

The protein resides in the cytoplasm. Its subcellular location is the cytoskeleton. The protein localises to the spindle. It is found in the spindle pole. Functionally, as part of the augmin complex, plays a role in centrosome-independent generation of spindle microtubules. The complex is required for mitotic spindle assembly through its involvement in localizing gamma-tubulin to spindle microtubules. wac is dispensable for somatic mitosis and for assembly of spindle microtubules in oocytes during female meiosis but is required during female meiosis for chromosome alignment and segregation. It is required for microtubule assembly near spindle poles in oocytes. It is also required for acentrosomal microtubule nucleation and meiotic spindle formation during male meiosis. wac binds to microtubules in vitro. In Drosophila melanogaster (Fruit fly), this protein is Augmin complex subunit wac.